Reading from the N-terminus, the 930-residue chain is Isoleucine--tRNA ligase (930 aa).

The short motif at 57 to 67 is the 'HIGH' region element; sequence PYANGHIHLGT. E559 provides a ligand contact to L-isoleucyl-5'-AMP. A 'KMSKS' region motif is present at residues 600-604; the sequence is KMSKS. K603 contributes to the ATP binding site. Positions 899, 902, 918, and 921 each coordinate Zn(2+).

This sequence belongs to the class-I aminoacyl-tRNA synthetase family. IleS type 1 subfamily. Monomer. Requires Zn(2+) as cofactor.

The protein resides in the cytoplasm. The enzyme catalyses tRNA(Ile) + L-isoleucine + ATP = L-isoleucyl-tRNA(Ile) + AMP + diphosphate. Catalyzes the attachment of isoleucine to tRNA(Ile). As IleRS can inadvertently accommodate and process structurally similar amino acids such as valine, to avoid such errors it has two additional distinct tRNA(Ile)-dependent editing activities. One activity is designated as 'pretransfer' editing and involves the hydrolysis of activated Val-AMP. The other activity is designated 'posttransfer' editing and involves deacylation of mischarged Val-tRNA(Ile). This chain is Isoleucine--tRNA ligase, found in Desulforudis audaxviator (strain MP104C).